We begin with the raw amino-acid sequence, 144 residues long: Transcription antitermination protein NusB (144 aa).

It belongs to the NusB family.

Its function is as follows. Involved in transcription antitermination. Required for transcription of ribosomal RNA (rRNA) genes. Binds specifically to the boxA antiterminator sequence of the ribosomal RNA (rrn) operons. This is Transcription antitermination protein NusB from Haemophilus influenzae (strain 86-028NP).